The sequence spans 286 residues: Glycine--tRNA ligase alpha subunit (286 aa).

The protein belongs to the class-II aminoacyl-tRNA synthetase family. Tetramer of two alpha and two beta subunits.

Its subcellular location is the cytoplasm. It catalyses the reaction tRNA(Gly) + glycine + ATP = glycyl-tRNA(Gly) + AMP + diphosphate. This is Glycine--tRNA ligase alpha subunit from Campylobacter lari (strain RM2100 / D67 / ATCC BAA-1060).